The sequence spans 440 residues: Probable aldose 1-epimerase ARB_05372 (440 aa).

The first 24 residues, 1–24 (MCGVLRQLMLLLLAFLSITPSCSA), serve as a signal peptide directing secretion. N-linked (GlcNAc...) asparagine glycosylation is found at Asn-32, Asn-38, Asn-43, Asn-68, and Asn-112. Residue 125–126 (NR) coordinates substrate. Residues Asn-129, Asn-147, Asn-163, Asn-171, and Asn-199 are each glycosylated (N-linked (GlcNAc...) asparagine). The Proton donor role is filled by His-233. 4 N-linked (GlcNAc...) asparagine glycosylation sites follow: Asn-243, Asn-275, Asn-281, and Asn-306. Asp-311 is a binding site for substrate. N-linked (GlcNAc...) asparagine glycosylation is found at Asn-321, Asn-337, Asn-365, and Asn-385. The Proton acceptor role is filled by Glu-401.

Belongs to the aldose epimerase family. In terms of assembly, monomer.

Its subcellular location is the secreted. The catalysed reaction is alpha-D-glucose = beta-D-glucose. Its pathway is carbohydrate metabolism; hexose metabolism. In terms of biological role, mutarotase converts alpha-aldose to the beta-anomer. It is active on D-glucose, L-arabinose, D-xylose, D-galactose, maltose and lactose. The polypeptide is Probable aldose 1-epimerase ARB_05372 (Arthroderma benhamiae (strain ATCC MYA-4681 / CBS 112371) (Trichophyton mentagrophytes)).